The primary structure comprises 440 residues: MKMTGWKKKLCRGHHLWALGCYMLLAVVALRLSLRLKCDVDSLDLESRDFQSQRCRDVLYKNLKLPAKRSINCSGITRGDQEAVVQALLDNLEVKKKRLPFTDTYYLNITRDCEQFKAQRKFIQFPLSKEELDFPIAYSMVVHEKIENFERLLRAVYAPQNIYCVHVDVKSPETFKEAVKAIISCFPNVFMASKLVPVVYASWSRVQADLNCMEDLLQSSVPWKYLLNTCGTDFPIKTNAEMVLALKMLNGKNSMESEIPSEYKKTRWKYRYEVTDRLSLTSKMKDPPPDNLPVFTGNAYFVASRAFVQHVLENPKSQRLIEWVKDTYSPDEHLWATLQRAPWMPGSVPYHPKYHISDMTAIARLVKWQGHEGDVSMGAPYAPCSGIHQRAICIYGVGDLHWILQNHHLLANKFDPRVDDNVLQCLEEYLRHKAIYGTEL.

Residues methionine 1 to arginine 12 lie on the Cytoplasmic side of the membrane. The helical; Signal-anchor for type II membrane protein transmembrane segment at glycine 13–leucine 30 threads the bilayer. Residues arginine 31 to leucine 440 are Lumenal-facing. Intrachain disulfides connect cysteine 73–cysteine 230, cysteine 164–cysteine 384, cysteine 185–cysteine 212, and cysteine 393–cysteine 425. An N-linked (GlcNAc...) asparagine glycan is attached at asparagine 108.

Belongs to the glycosyltransferase 14 family. In terms of processing, N-glycosylated.

It is found in the golgi apparatus membrane. It carries out the reaction a 3-O-[beta-D-galactosyl-(1-&gt;3)-N-acetyl-alpha-D-galactosaminyl]-L-seryl-[protein] + UDP-N-acetyl-alpha-D-glucosamine = 3-O-{beta-D-galactosyl-(1-&gt;3)-[N-acetyl-beta-D-glucosaminyl-(1-&gt;6)]-N-acetyl-alpha-D-galactosaminyl}-L-seryl-[protein] + UDP + H(+). The catalysed reaction is a 3-O-[beta-D-galactosyl-(1-&gt;3)-N-acetyl-alpha-D-galactosaminyl]-L-threonyl-[protein] + UDP-N-acetyl-alpha-D-glucosamine = a 3-O-{beta-D-galactosyl-(1-&gt;3)-[N-acetyl-beta-D-glucosaminyl-(1-&gt;6)]-N-acetyl-alpha-D-galactosaminyl}-L-threonyl-[protein] + UDP + H(+). It catalyses the reaction a beta-D-Gal-(1-&gt;4)-beta-D-GlcNAc-(1-&gt;3)-beta-D-Gal-(1-&gt;4)-beta-D-GlcNAc derivative + UDP-N-acetyl-alpha-D-glucosamine = a beta-D-Gal-(1-&gt;4)-beta-D-GlcNAc-(1-&gt;3)-[beta-D-GlcNAc-(1-&gt;6)]-beta-D-Gal-(1-&gt;4)-N-acetyl-beta-D-glucosaminyl derivative + UDP + H(+). The enzyme catalyses 3-O-[N-acetyl-beta-D-glucosaminyl-(1-&gt;3)-N-acetyl-alpha-D-galactosaminyl]-L-seryl-[protein] + UDP-N-acetyl-alpha-D-glucosamine = 3-O-[N-acetyl-beta-D-glucosaminyl-(1-&gt;3)-[N-acetyl-beta-D-glucosaminyl-(1-&gt;6)]-N-acetyl-alpha-D-galactosaminyl]-L-seryl-[protein] + UDP + H(+). It carries out the reaction a 3-O-[N-acetyl-beta-D-glucosaminyl-(1-&gt;3)-N-acetyl-alpha-D-galactosaminyl]-L-threonyl-[protein] + UDP-N-acetyl-alpha-D-glucosamine = 3-O-[N-acetyl-beta-D-glucosaminyl-(1-&gt;3)-[N-acetyl-beta-D-glucosaminyl-(1-&gt;6)]-N-acetyl-alpha-D-galactosaminyl]-L-threonyl-[protein] + UDP + H(+). It functions in the pathway protein modification; protein glycosylation. Its function is as follows. Glycosyltransferase that can synthesize all known mucin beta 6 N-acetylglucosaminides. Mediates core 2 and core 4 O-glycan branching, 2 important steps in mucin-type biosynthesis. Also has I-branching enzyme activity by converting linear into branched poly-N-acetyllactosaminoglycans, leading to introduce the blood group I antigen during embryonic development. This is Beta-1,3-galactosyl-O-glycosyl-glycoprotein beta-1,6-N-acetylglucosaminyltransferase 3 (GCNT3) from Ovis aries (Sheep).